A 532-amino-acid polypeptide reads, in one-letter code: Beta-hexosaminidase subunit A1 (532 aa).

An N-terminal signal peptide occupies residues 1 to 18 (MIKKIILFFAVLIAIVIG). Asparagine 72 and asparagine 79 each carry an N-linked (GlcNAc...) asparagine glycan. Glutamate 308 serves as the catalytic Proton donor. N-linked (GlcNAc...) asparagine glycans are attached at residues asparagine 350 and asparagine 427.

The protein belongs to the glycosyl hydrolase 20 family. Dimer. In terms of processing, the N-terminus is blocked. Post-translationally, N-glycosylated.

The protein resides in the lysosome. It carries out the reaction Hydrolysis of terminal non-reducing N-acetyl-D-hexosamine residues in N-acetyl-beta-D-hexosaminides.. Responsible for the degradation of GM2 gangliosides, and a variety of other molecules containing terminal N-acetyl hexosamines. This enzyme plays a role during the slug stage of development in the maintenance of pseudoplasmodia of normal size. The sequence is that of Beta-hexosaminidase subunit A1 (hexa1) from Dictyostelium discoideum (Social amoeba).